The primary structure comprises 606 residues: MDSQRELAEELRLYQSTLLQDGLKDLLEEKKFIDCTLKAGDKSFPCHRLILSACSPYFREYFLSEIEEEKKKEVALDNVDPAILDLIIKYLYSASIDLNDGNVQDIFALSSRFQIPSVFTVCVSYLQKRLAPGNCLAILRLGLLLDCPRLAISAREFVSDRFVQICKEEDFMQLSPQELISVISNDSLNVEKEEVVFEAVMKWVRTDKENRAKNLSEVFDCIRFRLMAEKYFKDHVEKDDIIKSNPEVQKKIKVLKDAFAGKLPEPSKNAEKAGAGEVNGDVGDEDLLPGYLNDIPRHGMFVKDLILLVNDTAAVAYDPMENECYLTALAEQIPRNHSSLVTQQNQVYVVGGLYVDEENKDQPLQSYFFQLDNVTSEWVGLPPLPSARCLFGLGEVDDKIYVVAGKDLQTEASLDSVLCYDPVAAKWSEVKNLPIKVYGHNVISHNGMIYCLGGKTDDKKCTNRVFIYNPKKGDWKDLAPMKTPRSMFGVAIHKGKIVIAGGVTEDGLSASVEAFDLKTNKWEVMTEFPQERSSISLVSLAGALYAIGGFAMIQLESKEFAPTEVNDIWKYEDDKKEWAGMLKEIRYASGASCLATRLNLFKLSKL.

S3 bears the Phosphoserine mark. Residues 33–100 (IDCTLKAGDK…LYSASIDLND (68 aa)) form the BTB domain. The BACK domain maps to 135 to 237 (CLAILRLGLL…AEKYFKDHVE (103 aa)). Kelch repeat units follow at residues 346–398 (QVYV…EVDD), 399–447 (KIYV…SHNG), 448–495 (MIYC…IHKG), 497–542 (IVIA…SLAG), and 544–599 (LYAI…TRLN).

Interacts with NRAP. Part of a complex that contains CUL3, RBX1 and KLHL41. Interacts with LASP1. Post-translationally, ubiquitinated by E3 ubiquitin ligase complex formed by CUL3 and RBX1 and probably targeted for proteasome-independent degradation. Quinone-induced oxidative stress increases its ubiquitination. As to expression, skeletal muscle. Localized between laterally fusing myofibrils in skeletal muscle (at protein level). Expressed at a lower level in the heart compared to skeletal muscle.

It localises to the cytoplasm. It is found in the cytoskeleton. Its subcellular location is the cell projection. The protein resides in the pseudopodium. The protein localises to the ruffle. It localises to the myofibril. It is found in the sarcomere. Its subcellular location is the m line. The protein resides in the sarcoplasmic reticulum membrane. The protein localises to the endoplasmic reticulum membrane. Involved in skeletal muscle development and differentiation. Regulates proliferation and differentiation of myoblasts and plays a role in myofibril assembly by promoting lateral fusion of adjacent thin fibrils into mature, wide myofibrils. Required for pseudopod elongation in transformed cells. The protein is Kelch-like protein 41 (Klhl41) of Mus musculus (Mouse).